We begin with the raw amino-acid sequence, 326 residues long: Glycolipid sulfotransferase MRA_1383 (326 aa).

40–45 (KSGLTW) is a binding site for 3'-phosphoadenylyl sulfate. Histidine 97 acts as the Proton acceptor in catalysis. Residue 116 to 124 (RDPRDAAVS) coordinates 3'-phosphoadenylyl sulfate.

Belongs to the sulfotransferase 1 family.

Functionally, involved in the synthesis of cell wall sulfolipids. The protein is Glycolipid sulfotransferase MRA_1383 of Mycobacterium tuberculosis (strain ATCC 25177 / H37Ra).